The sequence spans 486 residues: Ribosomal protein uS12 methylthiotransferase RimO (486 aa).

The region spanning 9 to 125 is the MTTase N-terminal domain; sequence RSVALVTLGC…LSSHLEAILH (117 aa). Residues Cys-18, Cys-54, Cys-88, Cys-191, Cys-195, and Cys-198 each contribute to the [4Fe-4S] cluster site. In terms of domain architecture, Radical SAM core spans 177–408; that stretch reads LGSGPWAPVK…RLVEELVTQR (232 aa). Positions 410–482 constitute a TRAM domain; that stretch reads EERLGEVVEV…GADLLAEPLV (73 aa).

The protein belongs to the methylthiotransferase family. RimO subfamily. [4Fe-4S] cluster serves as cofactor.

Its subcellular location is the cytoplasm. The catalysed reaction is L-aspartate(89)-[ribosomal protein uS12]-hydrogen + (sulfur carrier)-SH + AH2 + 2 S-adenosyl-L-methionine = 3-methylsulfanyl-L-aspartate(89)-[ribosomal protein uS12]-hydrogen + (sulfur carrier)-H + 5'-deoxyadenosine + L-methionine + A + S-adenosyl-L-homocysteine + 2 H(+). In terms of biological role, catalyzes the methylthiolation of an aspartic acid residue of ribosomal protein uS12. This chain is Ribosomal protein uS12 methylthiotransferase RimO, found in Kineococcus radiotolerans (strain ATCC BAA-149 / DSM 14245 / SRS30216).